Reading from the N-terminus, the 88-residue chain is Prolevitide (88 aa).

Residues 1-20 (MYKGIFLCVLFAVICANSLA) form the signal peptide. Position 74 is a pyrrolidone carboxylic acid (Q74). Position 87 is a glutamine amide (Q87).

The protein belongs to the gastrin/cholecystokinin family. In terms of tissue distribution, expressed by the skin glands.

It is found in the secreted. The sequence is that of Prolevitide from Xenopus laevis (African clawed frog).